Reading from the N-terminus, the 121-residue chain is Small ribosomal subunit protein uS13 (121 aa).

The disordered stretch occupies residues 94–121 (GLPLRGQRTRTNARTRKGPRRAAQSLKK).

Belongs to the universal ribosomal protein uS13 family. As to quaternary structure, part of the 30S ribosomal subunit. Forms a loose heterodimer with protein S19. Forms two bridges to the 50S subunit in the 70S ribosome.

In terms of biological role, located at the top of the head of the 30S subunit, it contacts several helices of the 16S rRNA. In the 70S ribosome it contacts the 23S rRNA (bridge B1a) and protein L5 of the 50S subunit (bridge B1b), connecting the 2 subunits; these bridges are implicated in subunit movement. Contacts the tRNAs in the A and P-sites. The sequence is that of Small ribosomal subunit protein uS13 from Paraburkholderia phymatum (strain DSM 17167 / CIP 108236 / LMG 21445 / STM815) (Burkholderia phymatum).